Here is a 79-residue protein sequence, read N- to C-terminus: Acyl carrier protein (79 aa).

In terms of domain architecture, Carrier spans 6–79; that stretch reads KEILDGLAEI…VQDVINYIQK (74 aa). Ser41 bears the O-(pantetheine 4'-phosphoryl)serine mark.

Belongs to the acyl carrier protein (ACP) family. Post-translationally, 4'-phosphopantetheine is transferred from CoA to a specific serine of apo-ACP by AcpS. This modification is essential for activity because fatty acids are bound in thioester linkage to the sulfhydryl of the prosthetic group.

The protein localises to the cytoplasm. The protein operates within lipid metabolism; fatty acid biosynthesis. Carrier of the growing fatty acid chain in fatty acid biosynthesis. The chain is Acyl carrier protein from Thermobifida fusca (strain YX).